The following is a 284-amino-acid chain: Tropomyosin (284 aa).

The segment at 1-39 is disordered; it reads MDAIKKKMQAMKLEKDNAMDRADTLEQQNKEANIRAEKT. Residues 1-284 adopt a coiled-coil conformation; the sequence is MDAIKKKMQA…DQTFSELSGY (284 aa). Residues 12–39 show a composition bias toward basic and acidic residues; sequence KLEKDNAMDRADTLEQQNKEANIRAEKT.

It belongs to the tropomyosin family. Homodimer.

Its function is as follows. Tropomyosin, in association with the troponin complex, plays a central role in the calcium dependent regulation of muscle contraction. The sequence is that of Tropomyosin (TM1) from Homarus americanus (American lobster).